The following is a 503-amino-acid chain: Cytochrome P450 3A7 (503 aa).

Residue C442 coordinates heme.

The protein belongs to the cytochrome P450 family. Heme is required as a cofactor. Expressed in fetal liver (at protein level).

The protein resides in the endoplasmic reticulum membrane. The protein localises to the microsome membrane. The catalysed reaction is an organic molecule + reduced [NADPH--hemoprotein reductase] + O2 = an alcohol + oxidized [NADPH--hemoprotein reductase] + H2O + H(+). It catalyses the reaction 3beta-hydroxyandrost-5-en-17-one + reduced [NADPH--hemoprotein reductase] + O2 = 3beta,16alpha-dihydroxy-androst-5-en-17-one + oxidized [NADPH--hemoprotein reductase] + H2O + H(+). It carries out the reaction dehydroepiandrosterone 3-sulfate + reduced [NADPH--hemoprotein reductase] + O2 = 16alpha-hydroxydehydroepiandrosterone 3-sulfate + oxidized [NADPH--hemoprotein reductase] + H2O + H(+). The enzyme catalyses testosterone + reduced [NADPH--hemoprotein reductase] + O2 = 6beta,17beta-dihydroxyandrost-4-en-3-one + oxidized [NADPH--hemoprotein reductase] + H2O + H(+). The catalysed reaction is estrone + reduced [NADPH--hemoprotein reductase] + O2 = 2-hydroxyestrone + oxidized [NADPH--hemoprotein reductase] + H2O + H(+). It catalyses the reaction estrone + reduced [NADPH--hemoprotein reductase] + O2 = 4-hydroxyestrone + oxidized [NADPH--hemoprotein reductase] + H2O + H(+). It carries out the reaction estrone + reduced [NADPH--hemoprotein reductase] + O2 = 16alpha-hydroxyestrone + oxidized [NADPH--hemoprotein reductase] + H2O + H(+). The enzyme catalyses 17beta-estradiol + reduced [NADPH--hemoprotein reductase] + O2 = 2-hydroxy-17beta-estradiol + oxidized [NADPH--hemoprotein reductase] + H2O + H(+). The catalysed reaction is 17beta-estradiol + reduced [NADPH--hemoprotein reductase] + O2 = 6beta-hydroxyestradiol-17beta + oxidized [NADPH--hemoprotein reductase] + H2O + H(+). It catalyses the reaction all-trans-retinoate + reduced [NADPH--hemoprotein reductase] + O2 = all-trans-4-hydroxyretinoate + oxidized [NADPH--hemoprotein reductase] + H2O + H(+). It carries out the reaction all-trans-retinoate + reduced [NADPH--hemoprotein reductase] + O2 = all-trans-18-hydroxyretinoate + oxidized [NADPH--hemoprotein reductase] + H2O + H(+). It functions in the pathway steroid hormone biosynthesis. It participates in cofactor metabolism; retinol metabolism. In terms of biological role, a cytochrome P450 monooxygenase involved in the metabolism of steroid hormones and vitamins during embryogenesis. Mechanistically, uses molecular oxygen inserting one oxygen atom into a substrate, and reducing the second into a water molecule, with two electrons provided by NADPH via cytochrome P450 reductase (NADPH--hemoprotein reductase). Catalyzes the hydroxylation of carbon-hydrogen bonds. Metabolizes 3beta-hydroxyandrost-5-en-17-one (dehydroepiandrosterone, DHEA), a precursor in the biosynthesis of androgen and estrogen steroid hormones. Exhibits high catalytic activity for the formation of hydroxyestrogens from estrone (E1), particularly D-ring hydroxylated estrone at the C16-alpha position. Mainly hydroxylates all trans-retinoic acid (atRA) to 4-hydroxyretinoate and may play a role in atRA clearance during fetal development. Also involved in the oxidative metabolism of xenobiotics including anticonvulsants. This Homo sapiens (Human) protein is Cytochrome P450 3A7.